A 310-amino-acid polypeptide reads, in one-letter code: Serine/threonine-protein kinase pim-2 (310 aa).

Residues Tyr-30–Met-290 enclose the Protein kinase domain. ATP contacts are provided by residues Leu-36–Val-44 and Lys-59. Asp-167 functions as the Proton acceptor in the catalytic mechanism.

Belongs to the protein kinase superfamily. CAMK Ser/Thr protein kinase family. PIM subfamily. In terms of processing, autophosphorylated.

It carries out the reaction L-seryl-[protein] + ATP = O-phospho-L-seryl-[protein] + ADP + H(+). The catalysed reaction is L-threonyl-[protein] + ATP = O-phospho-L-threonyl-[protein] + ADP + H(+). Its function is as follows. Proto-oncogene with serine/threonine kinase activity involved in cell survival and cell proliferation. The sequence is that of Serine/threonine-protein kinase pim-2 (pim2) from Danio rerio (Zebrafish).